We begin with the raw amino-acid sequence, 1299 residues long: Protein prickle (1299 aa).

Over residues 1–19 the composition is skewed to gly residues; the sequence is MSSLSTGGGAGGSSGGPGG. 5 disordered regions span residues 1–24, 115–181, 241–289, 368–396, and 425–527; these read MSSLSTGGGAGGSSGGPGGADAAA, ADDG…EVTQ, EEES…PQVP, LPRHFSPSGQGLATPPALGSGGMGLPSSS, and LPPH…DDDS. The span at 145–159 shows a compositional bias: basic residues; that stretch reads SPRRSKKLLRSLRAH. A compositionally biased stretch (polar residues) spans 168–181; sequence NDTTTANESSEVTQ. Pro residues predominate over residues 263–272; it reads PVPPLPPPPA. Residues 425–434 show a composition bias toward low complexity; the sequence is LPPHHQQHPG. The segment covering 435–445 has biased composition (gly residues); sequence AGMGPGPGSGA. Over residues 457–469 the composition is skewed to polar residues; sequence PGCSANPKYSNAQ. In terms of domain architecture, PET spans 515–623; sequence MDMQRQSHSD…NVRQLMSARP (109 aa). A compositionally biased stretch (basic and acidic residues) spans 516 to 525; the sequence is DMQRQSHSDD. 3 consecutive LIM zinc-binding domains span residues 622–686, 687–747, and 748–810; these read RPCD…ETLK, PRCS…MFAE, and YCDY…GEPP. Disordered regions lie at residues 807–865, 902–940, and 1026–1249; these read GEPP…HQAT, KDLEHGGHMGGGDLTDFSGGRASSTSQNLSPLNSPGDFQ, and ADIL…SSSS. Over residues 844–864 the composition is skewed to low complexity; it reads PSSHASSSPPMSPQQQQQHQA. Composition is skewed to polar residues over residues 922–934 and 1070–1081; these read RASSTSQNLSPLN and SLNTPMSTQSAS. Positions 1089–1101 are enriched in low complexity; it reads SILSGASSSSPMS. Basic and acidic residues predominate over residues 1136–1150; the sequence is GERERDRDKDKEGGG. Residues 1151–1183 are compositionally biased toward basic residues; it reads RHGHGHSSRRRRRRKSSSSSSHHRSGSGHRSHS. Residues 1216-1231 are compositionally biased toward basic and acidic residues; it reads SPSRQQRERERERERE. Residues 1238–1249 show a composition bias toward low complexity; that stretch reads VCSTCSSSSSSS.

The protein belongs to the prickle / espinas / testin family. Interacts with dsh; PET and LIM domains interact with dsh DEP domain, in wing cells. Interacts with Vang in photoreceptor cells. Expressed in the wing, leg and eye imaginal disks. Expressed within the photoreceptors of the eye.

It is found in the cell membrane. Its function is as follows. Acts in a planar cell polarity (PCP) complex; polarization along the apical/basal axis of epithelial cells. Correct expression of the alternative isoforms is required for PCP signaling in imaginal disks. PCP signaling in the wing disk requires the receptor fz and the cytoplasmic proteins dsh and pk. These act in a feedback loop leading to activation of the jnk cascade and subsequent polarized arrangement of hairs and bristles. Dgo and pk compete with one another for dsh binding, thereby modulating fz dsh activity and ensuring tight control over fz PCP signaling. Vang, stan and pk function together to regulate the establishment of tissue polarity in the adult eye. This chain is Protein prickle, found in Drosophila melanogaster (Fruit fly).